We begin with the raw amino-acid sequence, 379 residues long: Gonadotropin-releasing hormone II receptor (379 aa).

At 1 to 40 the chain is on the extracellular side; it reads MSAGNGTPWGSAAGEESWAASGVAVEGSELPTFSAAAKVR. The helical transmembrane segment at 41-60 threads the bilayer; that stretch reads VGVTIVLFVSSAGGNLAVLW. Topologically, residues 61–76 are cytoplasmic; that stretch reads SVTRPQPSQLRPSPVR. Residues 77 to 96 traverse the membrane as a helical segment; it reads TLFAHLAAADLLVTFVVMPL. The Extracellular segment spans residues 97 to 114; it reads DATWNITVQWLAEDIACR. N-linked (GlcNAc...) asparagine glycosylation is present at N101. Residues C113 and C188 are joined by a disulfide bond. Residues 115 to 136 form a helical membrane-spanning segment; it reads TLMFLKLMAMYSAAFLPVVIGL. Residues 137–160 are Cytoplasmic-facing; the sequence is DRQAAVLNPLGSRSGVRKLLGAAW. Residues 161–178 form a helical membrane-spanning segment; it reads GLSFLLALPQLFLFHTVH. Over 179 to 204 the chain is Extracellular; it reads RAGPVPFTQCVTKGSFKARWQETTYN. Residues 205–224 traverse the membrane as a helical segment; it reads LFTFRCLFLLPLTAMAICYS. The Cytoplasmic portion of the chain corresponds to 225–278; it reads HIVLSVSSPQTRKGSHAPAGEFALCRSFDNCPRVRLWALRLALLILLTFILCWT. Residues 279-297 form a helical membrane-spanning segment; that stretch reads PYYLLGLWYWFSPTMLTEV. Over 298–303 the chain is Extracellular; sequence PPSLSH. The helical transmembrane segment at 304–323 threads the bilayer; the sequence is ILFLFGLLNAPLDPLLYGAF. Residues 324 to 379 are Cytoplasmic-facing; the sequence is TLGCQRGHQELSIDSSNEGSGRMLQQEIHALRQQEVQKTVTSRSAGETKDISITSI.

It belongs to the G-protein coupled receptor 1 family. In terms of processing, phosphorylated on the C-terminal cytoplasmic tail.

It localises to the cell membrane. Functionally, receptor for gonadotropin releasing hormone II (GnRH II). This receptor mediates its action by association with G proteins that activate a phosphatidylinositol-calcium second messenger system. The sequence is that of Gonadotropin-releasing hormone II receptor (GNRHR2) from Macaca mulatta (Rhesus macaque).